A 320-amino-acid polypeptide reads, in one-letter code: Methionyl-tRNA formyltransferase (320 aa).

Residue 114–117 participates in (6S)-5,6,7,8-tetrahydrofolate binding; it reads SLLP.

The protein belongs to the Fmt family.

It carries out the reaction L-methionyl-tRNA(fMet) + (6R)-10-formyltetrahydrofolate = N-formyl-L-methionyl-tRNA(fMet) + (6S)-5,6,7,8-tetrahydrofolate + H(+). Its function is as follows. Attaches a formyl group to the free amino group of methionyl-tRNA(fMet). The formyl group appears to play a dual role in the initiator identity of N-formylmethionyl-tRNA by promoting its recognition by IF2 and preventing the misappropriation of this tRNA by the elongation apparatus. The polypeptide is Methionyl-tRNA formyltransferase (Acinetobacter baumannii (strain ACICU)).